Reading from the N-terminus, the 144-residue chain is MALQFEAFCAGGLAPGWSLTVQGHADAGEDKFEINFLTDAGDIAFHVKPRFSSATVVGNAFQGGRWGQEEVSSVFPLTLGEPFEVEVSADTEHFHIYAQEQKVLQFPHRHRPLATITRVRVLSDHQLAQVELAKRGLSWGDGGY.

Positions 5-133 (FEAFCAGGLA…DHQLAQVELA (129 aa)) constitute a Galectin domain. Position 138 is a phosphoserine (Ser-138).

Homodimer. Lens-specific. Located at the interface between lens fiber cells (at protein level).

The polypeptide is Grifin (Grifin) (Rattus norvegicus (Rat)).